Reading from the N-terminus, the 297-residue chain is Acetyl-coenzyme A carboxylase carboxyl transferase subunit beta (297 aa).

In terms of domain architecture, CoA carboxyltransferase N-terminal spans 25–294 (LWVKCPETGQ…VPPKGRLPAP (270 aa)).

It belongs to the AccD/PCCB family. Acetyl-CoA carboxylase is a heterohexamer composed of biotin carboxyl carrier protein (AccB), biotin carboxylase (AccC) and two subunits each of ACCase subunit alpha (AccA) and ACCase subunit beta (AccD).

Its subcellular location is the cytoplasm. It catalyses the reaction N(6)-carboxybiotinyl-L-lysyl-[protein] + acetyl-CoA = N(6)-biotinyl-L-lysyl-[protein] + malonyl-CoA. The protein operates within lipid metabolism; malonyl-CoA biosynthesis; malonyl-CoA from acetyl-CoA: step 1/1. Functionally, component of the acetyl coenzyme A carboxylase (ACC) complex. Biotin carboxylase (BC) catalyzes the carboxylation of biotin on its carrier protein (BCCP) and then the CO(2) group is transferred by the transcarboxylase to acetyl-CoA to form malonyl-CoA. This is Acetyl-coenzyme A carboxylase carboxyl transferase subunit beta from Azorhizobium caulinodans (strain ATCC 43989 / DSM 5975 / JCM 20966 / LMG 6465 / NBRC 14845 / NCIMB 13405 / ORS 571).